We begin with the raw amino-acid sequence, 71 residues long: Ranatuerin-2Va (71 aa).

Positions 1–22 are cleaved as a signal peptide; that stretch reads MFTLKKSFLLLFFLGTITLSLC. The propeptide occupies 23–43; it reads EQERGADEDDGVEMTEEEVKR. The cysteines at positions 66 and 71 are disulfide-linked.

In terms of tissue distribution, expressed by the skin glands.

It localises to the secreted. Functionally, antimicrobial peptide. In Odorrana versabilis (Chinese bamboo leaf odorous frog), this protein is Ranatuerin-2Va.